The following is a 251-amino-acid chain: Small ribosomal subunit protein uS2 (251 aa).

The residue at position 2 (serine 2) is an N-acetylserine. A disordered region spans residues 209–251 (EIEQQTAEEAAQEAGEEEAKEEVTEEQTEAAEWAQENADNVEW). Residues 218 to 237 (AAQEAGEEEAKEEVTEEQTE) are compositionally biased toward acidic residues. A compositionally biased stretch (low complexity) spans 238 to 251 (AAEWAQENADNVEW).

This sequence belongs to the universal ribosomal protein uS2 family. As to quaternary structure, component of the small ribosomal subunit. Mature ribosomes consist of a small (40S) and a large (60S) subunit. The 40S subunit contains about 33 different proteins and 1 molecule of RNA (18S). The 60S subunit contains about 49 different proteins and 3 molecules of RNA (25S, 5.8S and 5S). Interacts with RPS21.

The protein localises to the cytoplasm. Functionally, required for the assembly and/or stability of the 40S ribosomal subunit. Required for the processing of the 20S rRNA-precursor to mature 18S rRNA in a late step of the maturation of 40S ribosomal subunits. The polypeptide is Small ribosomal subunit protein uS2 (Candida glabrata (strain ATCC 2001 / BCRC 20586 / JCM 3761 / NBRC 0622 / NRRL Y-65 / CBS 138) (Yeast)).